A 271-amino-acid polypeptide reads, in one-letter code: Digeranylgeranylglyceryl phosphate synthase (271 aa).

8 consecutive transmembrane segments (helical) span residues 11–31 (INCAMAALGVVVGELIAGARL), 33–53 (VGAVLAPVVAAVVCAGGNAIN), 88–108 (FAVGVGMATVINRMCLAIAAL), 125–145 (LIGNVMVSYLVGSCFLFGAAV), 149–169 (PAPAVWLFLLAFLANLVREIL), 201–221 (VFAIALAVLTPLPYLDGVVGW), 224–244 (LVLALPAAAVILLASVLAVAG), and 251–271 (AQRVVKVGMLLGLLAFLASLL).

Belongs to the UbiA prenyltransferase family. DGGGP synthase subfamily. Mg(2+) is required as a cofactor.

The protein resides in the cell membrane. The catalysed reaction is sn-3-O-(geranylgeranyl)glycerol 1-phosphate + (2E,6E,10E)-geranylgeranyl diphosphate = 2,3-bis-O-(geranylgeranyl)-sn-glycerol 1-phosphate + diphosphate. It participates in membrane lipid metabolism; glycerophospholipid metabolism. In terms of biological role, prenyltransferase that catalyzes the transfer of the geranylgeranyl moiety of geranylgeranyl diphosphate (GGPP) to the C2 hydroxyl of (S)-3-O-geranylgeranylglyceryl phosphate (GGGP). This reaction is the second ether-bond-formation step in the biosynthesis of archaeal membrane lipids. This is Digeranylgeranylglyceryl phosphate synthase from Methanopyrus kandleri (strain AV19 / DSM 6324 / JCM 9639 / NBRC 100938).